Consider the following 152-residue polypeptide: 3-hydroxyacyl-[acyl-carrier-protein] dehydratase FabZ (152 aa).

The active site involves H58.

It belongs to the thioester dehydratase family. FabZ subfamily.

The protein resides in the cytoplasm. It catalyses the reaction a (3R)-hydroxyacyl-[ACP] = a (2E)-enoyl-[ACP] + H2O. Its function is as follows. Involved in unsaturated fatty acids biosynthesis. Catalyzes the dehydration of short chain beta-hydroxyacyl-ACPs and long chain saturated and unsaturated beta-hydroxyacyl-ACPs. The polypeptide is 3-hydroxyacyl-[acyl-carrier-protein] dehydratase FabZ (Prochlorococcus marinus (strain AS9601)).